The chain runs to 138 residues: Cysteine desulfuration protein SufE (138 aa).

The active-site Cysteine persulfide intermediate is cysteine 51.

The protein belongs to the SufE family. As to quaternary structure, homodimer. Interacts with SufS.

The protein localises to the cytoplasm. Its pathway is cofactor biosynthesis; iron-sulfur cluster biosynthesis. Functionally, participates in cysteine desulfuration mediated by SufS. Cysteine desulfuration mobilizes sulfur from L-cysteine to yield L-alanine and constitutes an essential step in sulfur metabolism for biosynthesis of a variety of sulfur-containing biomolecules. Functions as a sulfur acceptor for SufS, by mediating the direct transfer of the sulfur atom from the S-sulfanylcysteine of SufS, an intermediate product of cysteine desulfuration process. The polypeptide is Cysteine desulfuration protein SufE (Escherichia coli O6:K15:H31 (strain 536 / UPEC)).